A 79-amino-acid polypeptide reads, in one-letter code: Sulfur carrier protein TusA (79 aa).

Cys-17 functions as the Cysteine persulfide intermediate in the catalytic mechanism.

Belongs to the sulfur carrier protein TusA family.

It localises to the cytoplasm. Its function is as follows. Sulfur carrier protein which probably makes part of a sulfur-relay system. The chain is Sulfur carrier protein TusA from Histophilus somni (strain 129Pt) (Haemophilus somnus).